We begin with the raw amino-acid sequence, 200 residues long: 5'(3')-deoxyribonucleotidase, cytosolic type (200 aa).

Aspartate 12 acts as the Nucleophile in catalysis. Mg(2+) contacts are provided by aspartate 12 and aspartate 14. The active-site Proton donor is the aspartate 14. Residues phenylalanine 20, phenylalanine 46, tyrosine 67, and threonine 101 each coordinate substrate. Threonine 102 is subject to Phosphothreonine. Substrate is bound at residue lysine 136. Aspartate 147 contributes to the Mg(2+) binding site. The residue at position 184 (serine 184) is a Phosphoserine.

This sequence belongs to the 5'(3')-deoxyribonucleotidase family. As to quaternary structure, homodimer. It depends on Mg(2+) as a cofactor.

The protein resides in the cytoplasm. Its function is as follows. Dephosphorylates the 5' and 2'(3')-phosphates of deoxyribonucleotides, with a preference for dUMP and dTMP, intermediate activity towards dGMP, and low activity towards dCMP and dAMP. This is 5'(3')-deoxyribonucleotidase, cytosolic type (Nt5c) from Mus musculus (Mouse).